The sequence spans 629 residues: MNATGAGYPLASLYVGDLHPDVTEAMLYEKFSPAGPIMSIRVCRDIATRRSLGYAYINFQQPADAERALDTMNFEVIKGRPIRIMWSQRDPGLRKSGVGNVFIKNLDESIDNKALYDTFSAFGNILSCKVVCDEHGSRGYGFVHFETQEAANRAIQTMNGMLLNDRKVFVGHFKSRRERELEYGAKVMEFTNVYIKNFGEDMDDKRLREIFSAFGNTLSVKVMMDDTGRSRGFGFVNYGNHEEAQKAVSEMNGKEVNGRMIYVGRAQKRIERQGELKRKFEQIKQERINRYQGVNLYVKNLDDGIDDDRLRKEFSPYGTITSAKVMTEGGHSKGFGFVCFSSPEEATKAVTEMNGRIVSTKPLYVALAQRKEERKAILTNQYMQRLATMRAMPGPLLGSFQQPANYFLPAMPQPPNRTFYSPNPVAPVRQAPQWTSHQSRPPQYQPPAPLMRAVPPRRMSSNISTMKQASTQVPRVAPHSQRVANIGTQTAGARAQVNPSIMRTMPHYKYSCAVRNVQPIGTNTHLQQVMEPAVLMQGQEPLTASSLASAPPQEQKQMLGERLYPLIHEMHPTLAGKITGMLLEIDNSELLHMLESPESLHSKVEEAVAVLQAHQAKENSQKSAQQSLI.

4 RRM domains span residues 11-89 (ASLY…WSQR), 99-175 (GNVF…HFKS), 191-268 (TNVY…RAQK), and 294-370 (VNLY…LAQR). One can recognise a PABC domain in the interval 539–616 (QEPLTASSLA…AVAVLQAHQA (78 aa)).

It belongs to the polyadenylate-binding protein type-1 family. As to quaternary structure, interacts with dazl in an RNA-independent manner. The C-terminus can self-associate and also interact with the C-terminus of pabpc1, independently of RNA. RRM 1 and RRM 2 interact with both eif4g1 and paip1, and the C-terminus also interacts with paip1. Prior to oocyte maturation, found in a complex with dazl and pum2 proteins and spdy1 mRNA; pum2 dissociates from the complex during maturation. Interacts with the translation termination factor sup35/erf3.

It localises to the cytoplasm. Binds and protects the poly(A) tail of mRNA with or without an AU-rich element (ARE) and prevents mRNA deadenylation. Stimulates the translation of mRNAs to which it is bound during early development. The chain is Embryonic polyadenylate-binding protein from Xenopus tropicalis (Western clawed frog).